A 137-amino-acid chain; its full sequence is NADPH-dependent 7-cyano-7-deazaguanine reductase (137 aa).

Cysteine 50 acts as the Thioimide intermediate in catalysis. Aspartate 57 serves as the catalytic Proton donor. Substrate contacts are provided by residues 72-74 and 91-92; these read VEL and HE.

This sequence belongs to the GTP cyclohydrolase I family. QueF type 1 subfamily.

It is found in the cytoplasm. The enzyme catalyses 7-aminomethyl-7-carbaguanine + 2 NADP(+) = 7-cyano-7-deazaguanine + 2 NADPH + 3 H(+). The protein operates within tRNA modification; tRNA-queuosine biosynthesis. Functionally, catalyzes the NADPH-dependent reduction of 7-cyano-7-deazaguanine (preQ0) to 7-aminomethyl-7-deazaguanine (preQ1). The chain is NADPH-dependent 7-cyano-7-deazaguanine reductase from Synechococcus sp. (strain CC9902).